The sequence spans 82 residues: Small ribosomal subunit protein eS21 (82 aa).

The protein belongs to the eukaryotic ribosomal protein eS21 family.

The protein is Small ribosomal subunit protein eS21 (RPS21) of Oryza sativa subsp. japonica (Rice).